Consider the following 70-residue polypeptide: Large ribosomal subunit protein bL31 (70 aa).

Zn(2+) contacts are provided by Cys-16, Cys-18, Cys-37, and Cys-40.

The protein belongs to the bacterial ribosomal protein bL31 family. Type A subfamily. Part of the 50S ribosomal subunit. Requires Zn(2+) as cofactor.

Functionally, binds the 23S rRNA. The protein is Large ribosomal subunit protein bL31 of Shewanella denitrificans (strain OS217 / ATCC BAA-1090 / DSM 15013).